Here is a 35-residue protein sequence, read N- to C-terminus: Dolichyl-diphosphooligosaccharide--protein glycosyltransferase subunit 4B (35 aa).

Topologically, residues 1 to 8 (MFDDQDLG) are lumenal. Residues 9–29 (FFANFLGIFIFIMVIAYHFVV) traverse the membrane as a helical segment. The Cytoplasmic segment spans residues 30-35 (AEPKFE).

The protein belongs to the OST4 family. Component of the oligosaccharyltransferase (OST) complex.

Its subcellular location is the endoplasmic reticulum membrane. Subunit of the oligosaccharyl transferase (OST) complex that catalyzes the initial transfer of a defined glycan (Glc(3)Man(9)GlcNAc(2) in eukaryotes) from the lipid carrier dolichol-pyrophosphate to an asparagine residue within an Asn-X-Ser/Thr consensus motif in nascent polypeptide chains, the first step in protein N-glycosylation. N-glycosylation occurs cotranslationally and the complex associates with the Sec61 complex at the channel-forming translocon complex that mediates protein translocation across the endoplasmic reticulum (ER). All subunits are required for a maximal enzyme activity. This chain is Dolichyl-diphosphooligosaccharide--protein glycosyltransferase subunit 4B (OST4B), found in Arabidopsis thaliana (Mouse-ear cress).